A 334-amino-acid polypeptide reads, in one-letter code: Methionyl-tRNA formyltransferase (334 aa).

A (6S)-5,6,7,8-tetrahydrofolate-binding site is contributed by Ser111–Pro114.

Belongs to the Fmt family.

The catalysed reaction is L-methionyl-tRNA(fMet) + (6R)-10-formyltetrahydrofolate = N-formyl-L-methionyl-tRNA(fMet) + (6S)-5,6,7,8-tetrahydrofolate + H(+). In terms of biological role, attaches a formyl group to the free amino group of methionyl-tRNA(fMet). The formyl group appears to play a dual role in the initiator identity of N-formylmethionyl-tRNA by promoting its recognition by IF2 and preventing the misappropriation of this tRNA by the elongation apparatus. In Trichormus variabilis (strain ATCC 29413 / PCC 7937) (Anabaena variabilis), this protein is Methionyl-tRNA formyltransferase.